We begin with the raw amino-acid sequence, 346 residues long: D-erythrose-4-phosphate dehydrogenase (346 aa).

11–12 (RI) lines the NAD(+) pocket. Substrate is bound by residues 163 to 165 (SCT), Arg-209, 222 to 223 (TK), and Arg-245. The active-site Nucleophile is the Cys-164. Asn-327 contributes to the NAD(+) binding site.

It belongs to the glyceraldehyde-3-phosphate dehydrogenase family. Epd subfamily. As to quaternary structure, homotetramer.

The protein localises to the cytoplasm. It carries out the reaction D-erythrose 4-phosphate + NAD(+) + H2O = 4-phospho-D-erythronate + NADH + 2 H(+). Its pathway is cofactor biosynthesis; pyridoxine 5'-phosphate biosynthesis; pyridoxine 5'-phosphate from D-erythrose 4-phosphate: step 1/5. In terms of biological role, catalyzes the NAD-dependent conversion of D-erythrose 4-phosphate to 4-phosphoerythronate. This chain is D-erythrose-4-phosphate dehydrogenase, found in Vibrio vulnificus (strain CMCP6).